The primary structure comprises 477 residues: Serine/threonine-protein kinase prp4 (477 aa).

A disordered region spans residues 25-123; the sequence is KYQQTGNGHS…SPSVKRQNTG (99 aa). Positions 38-47 are enriched in basic and acidic residues; sequence IPEKKLKEDV. The span at 74-86 shows a compositional bias: polar residues; sequence EGSNSNTKLDVTN. The segment covering 87–98 has biased composition (low complexity); that stretch reads STTSDSPSIKSS. The residue at position 92 (S92) is a Phosphoserine. A compositionally biased stretch (polar residues) spans 113–123; it reads PSPSVKRQNTG. Positions 159 to 477 constitute a Protein kinase domain; the sequence is YIVQSNLGKG…ALKHPFFIKK (319 aa). ATP contacts are provided by residues 165 to 173 and K188; that span reads LGKGMFSTV. D286 (proton acceptor) is an active-site residue. Position 320 is a phosphotyrosine (Y320).

The protein belongs to the protein kinase superfamily. CMGC Ser/Thr protein kinase family.

It carries out the reaction L-seryl-[protein] + ATP = O-phospho-L-seryl-[protein] + ADP + H(+). The catalysed reaction is L-threonyl-[protein] + ATP = O-phospho-L-threonyl-[protein] + ADP + H(+). In terms of biological role, has a role in pre-mRNA splicing and is essential for growth. Phosphorylates srp1. This Schizosaccharomyces pombe (strain 972 / ATCC 24843) (Fission yeast) protein is Serine/threonine-protein kinase prp4 (prp4).